Reading from the N-terminus, the 324-residue chain is tRNA uridine(34) hydroxylase (324 aa).

One can recognise a Rhodanese domain in the interval 122–218 (QENRCLILDV…YGQQVGTGKW (97 aa)). The Cysteine persulfide intermediate role is filled by Cys178.

This sequence belongs to the TrhO family.

It carries out the reaction uridine(34) in tRNA + AH2 + O2 = 5-hydroxyuridine(34) in tRNA + A + H2O. Functionally, catalyzes oxygen-dependent 5-hydroxyuridine (ho5U) modification at position 34 in tRNAs. This chain is tRNA uridine(34) hydroxylase, found in Chlamydia pneumoniae (Chlamydophila pneumoniae).